Here is a 41-residue protein sequence, read N- to C-terminus: Large ribosomal subunit protein bL36 (41 aa).

Belongs to the bacterial ribosomal protein bL36 family.

The protein is Large ribosomal subunit protein bL36 of Rickettsia massiliae (strain Mtu5).